The sequence spans 172 residues: uncharacterized protein (172 aa).

In terms of domain architecture, N-acetyltransferase spans 12 to 172 (IRLRCMEDRD…IAVYERKSYN (161 aa)).

This is an uncharacterized protein from Bacillus subtilis (strain 168).